A 255-amino-acid polypeptide reads, in one-letter code: HTH-type transcriptional regulator SkgA (255 aa).

Residues 3–72 (VYTVKQMARL…LKDIQAALDQ (70 aa)) enclose the HTH merR-type domain. The segment at residues 6–25 (VKQMARLSGVSVRALHHYDA) is a DNA-binding region (H-T-H motif).

Regulates the induction of katG (catalase-peroxidase) in stationary phase. In Caulobacter vibrioides (strain ATCC 19089 / CIP 103742 / CB 15) (Caulobacter crescentus), this protein is HTH-type transcriptional regulator SkgA (skgA).